Reading from the N-terminus, the 475-residue chain is Putative F-box protein At1g46840 (475 aa).

Positions 25–71 (TYVLEKLHIDLVIEILSRLSAKSIAICRCVSKQWNSLLVSQDFVESF) constitute an F-box domain. Positions 423-433 (SSYSTTRSYKS) are enriched in low complexity. Positions 423–475 (SSYSTTRSYKSSGKRCSDRSIGEDEQDDIGEKRGDQAAERRERSTKRGKHEVH) are disordered. The segment covering 451 to 464 (IGEKRGDQAAERRE) has biased composition (basic and acidic residues). Residues 465 to 475 (RSTKRGKHEVH) show a composition bias toward basic residues.

The chain is Putative F-box protein At1g46840 from Arabidopsis thaliana (Mouse-ear cress).